Consider the following 140-residue polypeptide: VapC ribonuclease Y4jK (140 aa).

Residues I2–N135 form the PINc domain. Positions 5 and 104 each coordinate Mg(2+).

The protein belongs to the PINc/VapC protein family. Mg(2+) serves as cofactor.

In terms of biological role, toxic component of a type II toxin-antitoxin (TA) system. An RNase. Involved in plasmid stability. In Sinorhizobium fredii (strain NBRC 101917 / NGR234), this protein is VapC ribonuclease Y4jK.